The following is a 163-amino-acid chain: uncharacterized protein (163 aa).

The span at 1-10 (MTHPLPHDSH) shows a compositional bias: basic and acidic residues. 2 disordered regions span residues 1–21 (MTHP…VNKS) and 71–112 (SKQP…EQRR). The segment covering 90–105 (PASSLQDHSRLTSLSR) has biased composition (polar residues).

This is an uncharacterized protein from Homo sapiens (Human).